Consider the following 125-residue polypeptide: MAPLKKGGEKKKGRSAINEVVTREYTINVHKRIHGISFKKRAPRAIKEIRKFAMKEMGTPDVRIDTRLNKAVWAKGVRNVPYRMRVRLSRKRNEDEDSPNKLYTLVTYVPVTTYKGLQTVNVDEN.

The protein belongs to the eukaryotic ribosomal protein eL31 family. Component of the large ribosomal subunit.

Its subcellular location is the cytoplasm. Component of the large ribosomal subunit. The ribosome is a large ribonucleoprotein complex responsible for the synthesis of proteins in the cell. This Ictalurus punctatus (Channel catfish) protein is Large ribosomal subunit protein eL31 (rpl31).